A 489-amino-acid chain; its full sequence is Lysine--tRNA ligase (489 aa).

Positions 398 and 405 each coordinate Mg(2+).

Belongs to the class-II aminoacyl-tRNA synthetase family. As to quaternary structure, homodimer. The cofactor is Mg(2+).

Its subcellular location is the cytoplasm. The enzyme catalyses tRNA(Lys) + L-lysine + ATP = L-lysyl-tRNA(Lys) + AMP + diphosphate. This chain is Lysine--tRNA ligase, found in Moorella thermoacetica (strain ATCC 39073 / JCM 9320).